The sequence spans 296 residues: Putative S-adenosyl-L-methionine-dependent methyltransferase MAV_4764 (296 aa).

S-adenosyl-L-methionine-binding positions include D121 and 150–151 (DL).

This sequence belongs to the UPF0677 family.

Its function is as follows. Exhibits S-adenosyl-L-methionine-dependent methyltransferase activity. The sequence is that of Putative S-adenosyl-L-methionine-dependent methyltransferase MAV_4764 from Mycobacterium avium (strain 104).